A 396-amino-acid polypeptide reads, in one-letter code: Cysteine protease ATG4A (396 aa).

Cys77 serves as the catalytic Nucleophile. Residues Asp276 and His278 contribute to the active site. Positions 390–393 (FEIL) match the LIR motif.

Belongs to the peptidase C54 family. As to quaternary structure, interacts with ATG9A; the interaction is direct.

It localises to the cytoplasm. The enzyme catalyses [protein]-C-terminal L-amino acid-glycyl-phosphatidylethanolamide + H2O = [protein]-C-terminal L-amino acid-glycine + a 1,2-diacyl-sn-glycero-3-phosphoethanolamine. Its activity is regulated as follows. Inhibited by N-ethylmaleimide. Redox-regulated during autophagy since reducing conditions activate ATG4A whereas an oxidizing environment such as the presence of H(2)O(2) inhibits its activity. In terms of biological role, cysteine protease that plays a key role in autophagy by mediating both proteolytic activation and delipidation of ATG8 family proteins. The protease activity is required for proteolytic activation of ATG8 family proteins: cleaves the C-terminal amino acid of ATG8 proteins to reveal a C-terminal glycine. Exposure of the glycine at the C-terminus is essential for ATG8 proteins conjugation to phosphatidylethanolamine (PE) and insertion to membranes, which is necessary for autophagy. Preferred substrate is GABARAPL2 followed by MAP1LC3A and GABARAP. Protease activity is also required to counteract formation of high-molecular weight conjugates of ATG8 proteins (ATG8ylation): acts as a deubiquitinating-like enzyme that removes ATG8 conjugated to other proteins, such as ATG3. In addition to the protease activity, also mediates delipidation of ATG8 family proteins. Catalyzes delipidation of PE-conjugated forms of ATG8 proteins during macroautophagy. Compared to ATG4B, the major protein for proteolytic activation of ATG8 proteins, shows weaker ability to cleave the C-terminal amino acid of ATG8 proteins, while it displays stronger delipidation activity. Involved in phagophore growth during mitophagy independently of its protease activity and of ATG8 proteins: acts by regulating ATG9A trafficking to mitochondria and promoting phagophore-endoplasmic reticulum contacts during the lipid transfer phase of mitophagy. The chain is Cysteine protease ATG4A from Mus musculus (Mouse).